Here is a 256-residue protein sequence, read N- to C-terminus: Sorbitol dehydrogenase (256 aa).

NAD(+) is bound by residues 15–17 (RGI), Asp36, 59–60 (DV), Asn86, Tyr152, Lys156, and 182–187 (PGVVDG). The Proton acceptor role is filled by Tyr152.

This sequence belongs to the short-chain dehydrogenases/reductases (SDR) family. In terms of assembly, homodimer. May function as a tetramer in vivo.

It carries out the reaction keto-D-fructose + NADH + H(+) = D-sorbitol + NAD(+). The catalysed reaction is galactitol + NAD(+) = keto-D-tagatose + NADH + H(+). It catalyses the reaction L-iditol + NAD(+) = keto-L-sorbose + NADH + H(+). With respect to regulation, inhibited by DTT, N-bromosuccinimide and iodoacetic acid. Functionally, catalyzes the oxidation of D-sorbitol (D-glucitol) to D-fructose. Can also catalyze the oxidation of galactitol to D-tagatose and the oxidation of L-iditol, with lower efficiency. The protein is Sorbitol dehydrogenase (polS) of Cereibacter sphaeroides (Rhodobacter sphaeroides).